The following is a 1497-amino-acid chain: Polyunsaturated fatty acid synthase subunit C (1497 aa).

Dehydratase (DH) domain stretches follow at residues 271–422 and 797–937; these read YKLC…DYGK and QGQY…RVRI. Low complexity predominate over residues 944–958; the sequence is ASSSASSVGSSASAE. Residues 944 to 977 are disordered; sequence ASSSASSVGSSASAEVAERTRSKAAPQPVASGPA. The interval 1026 to 1470 is enoylreductase (ER) domain; the sequence is LGDLGDRSFM…ILRGACYLRR (445 aa).

It belongs to the thioester dehydratase family. FabA subfamily. In terms of assembly, component of the polyunsaturated fatty acid synthase complex composed of at least ORF-A, ORF-B and ORF-C.

The protein operates within lipid metabolism; fatty acid biosynthesis. Its function is as follows. Polyketide synthase-like protein; part of the polyunsaturated fatty acid synthase composed of the 3 PKS-like subunits A, B and C. While the saturated fatty acids (SFAs) in Thraustochytrium are produced by the conventional fatty acid synthase (FAS) pathway, polyunsaturated fatty acids (PUFAs) including docosahexeanoic acid (DHA) and docosapentaenoic acid (DPA) are synthesized via an anaerobical PKS pathway. PUFA synthase assimilates fatty acyl-CoA, the product of FAS, as the starter unit to synthesize DPA, and this starter unit may be butyryl-CoA, hexanoyl-CoA, or octanoyl-CoA. DPA and DHA biosynthesis seem to differ by the reduction at the N-3 position by PUFA synthase, not the extension of carbon chain. In DHA biosynthesis, PUFA synthase extends the fatty acyl chain from the methyl toward the carboxyl end, and the double bond is formed when the carbon chain is growing, instead of afterward. Therefore, PUFA synthase is unable to transform DPA to DHA, suggesting that DPA is not the precursor of DHA. Moreover, DPA molecule is partly extended by FAS KS domain, so DPA biosynthesis is less dependent on PUFA synthase KS domain than DHA. This is Polyunsaturated fatty acid synthase subunit C from Thraustochytrium sp. (strain ATCC 26185 / S-3).